The chain runs to 172 residues: Large ribosomal subunit protein uL10 (172 aa).

It belongs to the universal ribosomal protein uL10 family. As to quaternary structure, part of the ribosomal stalk of the 50S ribosomal subunit. The N-terminus interacts with L11 and the large rRNA to form the base of the stalk. The C-terminus forms an elongated spine to which L12 dimers bind in a sequential fashion forming a multimeric L10(L12)X complex.

Functionally, forms part of the ribosomal stalk, playing a central role in the interaction of the ribosome with GTP-bound translation factors. The polypeptide is Large ribosomal subunit protein uL10 (Rhizobium leguminosarum bv. trifolii (strain WSM2304)).